Reading from the N-terminus, the 422-residue chain is Probable tRNA pseudouridine synthase D 2 (422 aa).

The active-site Nucleophile is Asp-89. The region spanning 160-371 is the TRUD domain; that stretch reads GAPNYFDSQR…IYSERKILSI (212 aa).

It belongs to the pseudouridine synthase TruD family.

It carries out the reaction uridine(13) in tRNA = pseudouridine(13) in tRNA. Functionally, could be responsible for synthesis of pseudouridine from uracil-13 in transfer RNAs. The sequence is that of Probable tRNA pseudouridine synthase D 2 from Methanocaldococcus jannaschii (strain ATCC 43067 / DSM 2661 / JAL-1 / JCM 10045 / NBRC 100440) (Methanococcus jannaschii).